We begin with the raw amino-acid sequence, 361 residues long: Rho-GTPase-activating protein 5 (361 aa).

The region spanning 52–245 is the Rho-GAP domain; the sequence is IFLTRRDGEK…FLINHQGSFI (194 aa). Residues 306-323 show a composition bias toward low complexity; sequence SSATYSNSPSSNFSNMKS. The tract at residues 306-345 is disordered; the sequence is SSATYSNSPSSNFSNMKSSEVDPGSPPRIKSRSYSLSRSS.

Its subcellular location is the membrane. Its function is as follows. GTPase-activating protein for Rho1. Has a role in the negative regulation of (1-3)beta-D-glucan synthase activity and cell integrity. This Schizosaccharomyces pombe (strain 972 / ATCC 24843) (Fission yeast) protein is Rho-GTPase-activating protein 5 (rga5).